The chain runs to 61 residues: Large ribosomal subunit protein uL30 (61 aa).

The protein belongs to the universal ribosomal protein uL30 family. In terms of assembly, part of the 50S ribosomal subunit.

In Lactobacillus delbrueckii subsp. bulgaricus (strain ATCC 11842 / DSM 20081 / BCRC 10696 / JCM 1002 / NBRC 13953 / NCIMB 11778 / NCTC 12712 / WDCM 00102 / Lb 14), this protein is Large ribosomal subunit protein uL30.